The following is a 369-amino-acid chain: Sulfate permease 2, chloroplastic (369 aa).

The tract at residues 1–21 (MASTTLLQPALGLPSRVGPRS) is disordered. The N-terminal 82 residues, 1 to 82 (MASTTLLQPA…QQSRGDLLVS (82 aa)), are a transit peptide targeting the chloroplast. Helical transmembrane passes span 110 to 130 (VGVAAAYIGLVVLVPFLNVFV), 156 to 176 (TLMLAFVTVPLNTVFGTVAAI), 187 to 207 (VFLMSLLDLPFSISPVVTGLM), 229 to 249 (VVFAFTGMALATMFVTLPFVV), and 335 to 355 (TEAAFAAAVLLSALALGTLWI). The region spanning 153-356 (LKMTLMLAFV…ALALGTLWIK (204 aa)) is the ABC transmembrane type-1 domain.

This sequence belongs to the ATP-binding cassette (ABC) (TC 3.A.1) superfamily. In terms of assembly, part of the chloroplast sulfate permease holocomplex. May form a heterodimer with SLUP1.

It is found in the plastid. The protein resides in the chloroplast membrane. Functionally, part of the ABC-type chloroplast envelope-localized sulfate transporter. In Chlamydomonas reinhardtii (Chlamydomonas smithii), this protein is Sulfate permease 2, chloroplastic (SULP2).